The primary structure comprises 321 residues: Urease accessory protein UreD (321 aa).

Belongs to the UreD family. As to quaternary structure, ureD, UreF and UreG form a complex that acts as a GTP-hydrolysis-dependent molecular chaperone, activating the urease apoprotein by helping to assemble the nickel containing metallocenter of UreC. The UreE protein probably delivers the nickel.

It is found in the cytoplasm. Functionally, required for maturation of urease via the functional incorporation of the urease nickel metallocenter. The protein is Urease accessory protein UreD of Photorhabdus laumondii subsp. laumondii (strain DSM 15139 / CIP 105565 / TT01) (Photorhabdus luminescens subsp. laumondii).